A 130-amino-acid polypeptide reads, in one-letter code: Chemotaxis protein CheY-3 (130 aa).

One can recognise a Response regulatory domain in the interval 10 to 127; the sequence is KILIVDDFST…TLKEKLDKIF (118 aa). Mg(2+)-binding residues include D15, D16, D60, and N62. A 4-aspartylphosphate modification is found at D60.

In terms of assembly, interacts with FliM. Mg(2+) is required as a cofactor.

It localises to the cytoplasm. Acts as a response regulator to control chemotaxis. Involved in the transmission of sensory signals from the chemoreceptors to the flagellar motors. Switches the flagellar rotation by binding to the flagellar motor switch protein FliM. In its active (phosphorylated or acetylated) form, exhibits enhanced binding to a switch component, FliM, at the flagellar motor which induces a change from counterclockwise to clockwise flagellar rotation. This is Chemotaxis protein CheY-3 from Vibrio cholerae serotype O1 (strain ATCC 39315 / El Tor Inaba N16961).